Here is a 345-residue protein sequence, read N- to C-terminus: MSHELTLQQRLEVQAGPDPLHRAVKEAVAALAQAAIDISDLTCRGALAGITGEAQGRNTDGDIQKDLDVRADQIIRDALSALPIAVLASEEMAELDILNPGAPISVAFDPLDGSSNINTNISVGTIFSIMPTPPDASAAFTQPGSAQLAAGFVVYGPQTSLILTLGQGVDIFTLDRVERVFKLTGSMMQIPADATEFAINTSNRRHWDLPVRAYIDECLMGADGPSGKNFNMRWIGSLVAEAFRILVRGGIFLYPGDARDGYEDGRLRLVYEAHPMAFIIEQAGGGASTGRKRILDIVPGSLHQRVPLIMGSIKNVRRLEDMHTGPNVALEANAPLFGHRGLFRV.

The Mg(2+) site is built by Glu-90, Asp-109, Leu-111, and Asp-112. Substrate-binding positions include 112–115 and Asn-200; that span reads DGSS. Glu-272 provides a ligand contact to Mg(2+).

The protein belongs to the FBPase class 1 family. Homotetramer. Mg(2+) is required as a cofactor.

The protein resides in the cytoplasm. The enzyme catalyses beta-D-fructose 1,6-bisphosphate + H2O = beta-D-fructose 6-phosphate + phosphate. It functions in the pathway carbohydrate biosynthesis; gluconeogenesis. The sequence is that of Fructose-1,6-bisphosphatase class 1 2 from Nitrobacter hamburgensis (strain DSM 10229 / NCIMB 13809 / X14).